Here is a 471-residue protein sequence, read N- to C-terminus: Paraneoplastic antigen-like protein 8A (471 aa).

2 disordered regions span residues 188 to 300 (SAAG…EGSA) and 321 to 471 (ASRG…PSAV). Positions 238-247 (HSRRKRQKKT) are enriched in basic residues. Over residues 256-269 (KKSQGSHSHSSASL) the composition is skewed to low complexity. Residues 270–287 (KHPEADDGKNRERLEHVR) show a composition bias toward basic and acidic residues.

This sequence belongs to the PNMA family.

The polypeptide is Paraneoplastic antigen-like protein 8A (PNMA8A) (Bos taurus (Bovine)).